Reading from the N-terminus, the 420-residue chain is MLGVPFIDRWLSETFKPKTFDDAVDRLSYVTTATLLAFFSIMVSCKQYVGSAIQCWMPMEFKGGWEQYAEDYCFIQNTFFIPERSEIPGDVEDRQKAEIGYYQWVPIVLAIQAFMFYLPSWIWSSLYKQCGLDFPSVISEAEALRSQDSETRTKGVNKLVDFIGDILDTRSKNEYGRFYCYRFGKGLGSMTSMLYICIKLMYLANVFVQFIILNKFLGNETFLWGFHTFADLYAGREWQDSGVFPRVTLCDFSVRKLANVHRYTVQCVLMINMFNEKIYLFIWFWFVFVLITTFINTLCTIYRLSFDSSRHNYIRSLLSGPVNNFKDEKAMIASFANNGLKQDGVLLMRFIDDHAGAMVTKEICEELFKKHGENLQHNRDFHHGHSTKSTSPGLEEGHHEHLYTPEKMKLMAPDYPIKHA.

4 helical membrane passes run alanine 33–isoleucine 53, tryptophan 104–serine 124, methionine 193–leucine 213, and isoleucine 278–leucine 298. The segment at asparagine 378 to proline 405 is disordered. Residues glutamate 395–proline 405 are compositionally biased toward basic and acidic residues.

Belongs to the pannexin family. Interacts with F-actin. In terms of tissue distribution, evenly distributed along the adjoining membranes of the two pm5 pharyngeal muscle cells.

Its subcellular location is the cell membrane. The protein localises to the cell junction. It is found in the gap junction. Its function is as follows. Structural component of gap junctions. Plays a role in maintaining gap junction activity to promote phayngeal muscle contraction. The sequence is that of Innexin-3 from Caenorhabditis elegans.